A 224-amino-acid polypeptide reads, in one-letter code: Putative adhesin A1G_07050 (224 aa).

The N-terminal stretch at Met-1–Ala-22 is a signal peptide.

This chain is Putative adhesin A1G_07050, found in Rickettsia rickettsii (strain Sheila Smith).